A 195-amino-acid polypeptide reads, in one-letter code: Imidazoleglycerol-phosphate dehydratase (195 aa).

This sequence belongs to the imidazoleglycerol-phosphate dehydratase family.

Its subcellular location is the cytoplasm. It carries out the reaction D-erythro-1-(imidazol-4-yl)glycerol 3-phosphate = 3-(imidazol-4-yl)-2-oxopropyl phosphate + H2O. It functions in the pathway amino-acid biosynthesis; L-histidine biosynthesis; L-histidine from 5-phospho-alpha-D-ribose 1-diphosphate: step 6/9. The chain is Imidazoleglycerol-phosphate dehydratase from Dechloromonas aromatica (strain RCB).